The following is a 455-amino-acid chain: Peroxisomal membrane protein PEX3 (455 aa).

Polar residues predominate over residues 113–125; sequence TVLSDDFSTSQEG. A disordered region spans residues 113–135; the sequence is TVLSDDFSTSQEGAISEDTNKPP. A helical transmembrane segment spans residues 155-171; that stretch reads FLTLIYCESLLIVFLHL.

This sequence belongs to the peroxin-3 family. In terms of assembly, component of the peroxisomal docking complex, composed of at least PEX3, PEX13, PEX14 and PEX17. Component of the peroxisomal translocation complex, composed of at least PEX3, PEX2, PEX10 and PEX12. Interacts with PEX19. Interacts with the pexophagy receptor ATG30.

The protein localises to the peroxisome membrane. Peroxisomal membrane protein required for peroxisome biosynthesis. Shared component of both the peroxisomal docking complex and the peroxisomal translocation complex. The two types of peroxisomal matrix targeting signals, PTS1 and PTS2, are first recognized in the cytosol by their receptors PEX5 and PEX7, respectively, which then carry the cargo to the peroxisomal membrane. The peroxisomal targeting signal (PTS) receptor-cargo complexes interact with peroxisomal membrane protein (PMP) components of the docking complex. They have then additional downstream interactions with the translocation complex, leading to the transport of fully folded and oligomerized cargo into the peroxisome matrix. PEX3 acts as an anchoring site for PEX19 on the peroxisomal membrane and thus plays a crucial role in the assembly of the peroxisomal translocation complex. Is also essential for the interaction between the two complexes. Finally. PEX3 activates selective autophagy of peroxisomes (pexophagy) via interaction with the pexophagy receptor ATG30. In Komagataella phaffii (strain GS115 / ATCC 20864) (Yeast), this protein is Peroxisomal membrane protein PEX3.